The sequence spans 57 residues: Zinc finger protein MJ0458.1 (57 aa).

Short sequence motifs (c(P)XCG motif) lie at residues 8–12 (CISCN), 26–30 (CPNCG), 37–41 (CERCR), and 49–53 (CPKCG). Zn(2+)-binding residues include Cys-26 and Cys-29. Zn(2+) is bound by residues Cys-49 and Cys-52.

As to quaternary structure, monomer in solution.

Its function is as follows. Zinc-binding protein that binds only one zinc ion. This is Zinc finger protein MJ0458.1 from Methanocaldococcus jannaschii (strain ATCC 43067 / DSM 2661 / JAL-1 / JCM 10045 / NBRC 100440) (Methanococcus jannaschii).